The sequence spans 211 residues: Uracil phosphoribosyltransferase (211 aa).

A GTP-binding site is contributed by 30–34 (KGLVR). 5-phospho-alpha-D-ribose 1-diphosphate is bound by residues arginine 79, arginine 104, and 133–141 (DPMLATGTT). Residues isoleucine 197 and 202-204 (GDA) contribute to the uracil site. Residue aspartate 203 participates in 5-phospho-alpha-D-ribose 1-diphosphate binding.

The protein belongs to the UPRTase family. Mg(2+) serves as cofactor.

The enzyme catalyses UMP + diphosphate = 5-phospho-alpha-D-ribose 1-diphosphate + uracil. Its pathway is pyrimidine metabolism; UMP biosynthesis via salvage pathway; UMP from uracil: step 1/1. With respect to regulation, allosterically activated by GTP. Catalyzes the conversion of uracil and 5-phospho-alpha-D-ribose 1-diphosphate (PRPP) to UMP and diphosphate. The protein is Uracil phosphoribosyltransferase of Pyrobaculum arsenaticum (strain DSM 13514 / JCM 11321 / PZ6).